Here is a 386-residue protein sequence, read N- to C-terminus: Phosphoglycerate kinase (386 aa).

Residues 21–23 (DLN), Arg36, 59–62 (HLGR), Arg113, and Arg146 each bind substrate. ATP contacts are provided by residues Lys197, Glu313, and 339–342 (GGDT).

Belongs to the phosphoglycerate kinase family. As to quaternary structure, monomer.

The protein localises to the cytoplasm. It catalyses the reaction (2R)-3-phosphoglycerate + ATP = (2R)-3-phospho-glyceroyl phosphate + ADP. It functions in the pathway carbohydrate degradation; glycolysis; pyruvate from D-glyceraldehyde 3-phosphate: step 2/5. The sequence is that of Phosphoglycerate kinase from Serratia proteamaculans (strain 568).